The primary structure comprises 74 residues: Ferredoxin-like protein in nif region (74 aa).

A 4Fe-4S ferredoxin-type domain is found at 2-30 (PFKIIASQCTSCSACEPLCPNVAISEKGG). Residues C10, C13, C16, C20, C39, C51, and C55 each contribute to the [4Fe-4S] cluster site.

It depends on [4Fe-4S] cluster as a cofactor.

The protein is Ferredoxin-like protein in nif region (frxA) of Bradyrhizobium diazoefficiens (strain JCM 10833 / BCRC 13528 / IAM 13628 / NBRC 14792 / USDA 110).